A 257-amino-acid polypeptide reads, in one-letter code: 4-hydroxy-tetrahydrodipicolinate reductase (257 aa).

Residues 8-13 (GSTGRV), 90-92 (ATT), and 114-117 (ATNM) each bind NAD(+). Histidine 146 serves as the catalytic Proton donor/acceptor. Histidine 147 provides a ligand contact to (S)-2,3,4,5-tetrahydrodipicolinate. Lysine 150 functions as the Proton donor in the catalytic mechanism. 156–157 (GT) contributes to the (S)-2,3,4,5-tetrahydrodipicolinate binding site.

This sequence belongs to the DapB family.

The protein resides in the cytoplasm. It catalyses the reaction (S)-2,3,4,5-tetrahydrodipicolinate + NAD(+) + H2O = (2S,4S)-4-hydroxy-2,3,4,5-tetrahydrodipicolinate + NADH + H(+). The enzyme catalyses (S)-2,3,4,5-tetrahydrodipicolinate + NADP(+) + H2O = (2S,4S)-4-hydroxy-2,3,4,5-tetrahydrodipicolinate + NADPH + H(+). It participates in amino-acid biosynthesis; L-lysine biosynthesis via DAP pathway; (S)-tetrahydrodipicolinate from L-aspartate: step 4/4. Catalyzes the conversion of 4-hydroxy-tetrahydrodipicolinate (HTPA) to tetrahydrodipicolinate. The polypeptide is 4-hydroxy-tetrahydrodipicolinate reductase (Aliarcobacter butzleri (strain RM4018) (Arcobacter butzleri)).